The primary structure comprises 87 residues: U15-lycotoxin-Ls1h (87 aa).

The first 20 residues, methionine 1–serine 20, serve as a signal peptide directing secretion. Residues aspartate 21–threonine 66 form the WAP domain. Cystine bridges form between cysteine 24/cysteine 54, cysteine 32/cysteine 58, cysteine 41/cysteine 53, cysteine 42/cysteine 80, and cysteine 47/cysteine 62.

This sequence belongs to the venom protein 11 family. 01 (wap-1) subfamily. Post-translationally, contains 5 disulfide bonds. Expressed by the venom gland.

Its subcellular location is the secreted. In terms of biological role, has antibacterial activity. This is U15-lycotoxin-Ls1h from Lycosa singoriensis (Wolf spider).